A 278-amino-acid polypeptide reads, in one-letter code: Ribosomal RNA small subunit methyltransferase A (278 aa).

Residues Asn-27, Leu-29, Gly-54, Glu-75, Asp-101, and Asn-120 each contribute to the S-adenosyl-L-methionine site.

This sequence belongs to the class I-like SAM-binding methyltransferase superfamily. rRNA adenine N(6)-methyltransferase family. RsmA subfamily.

The protein resides in the cytoplasm. The enzyme catalyses adenosine(1518)/adenosine(1519) in 16S rRNA + 4 S-adenosyl-L-methionine = N(6)-dimethyladenosine(1518)/N(6)-dimethyladenosine(1519) in 16S rRNA + 4 S-adenosyl-L-homocysteine + 4 H(+). Its function is as follows. Specifically dimethylates two adjacent adenosines (A1518 and A1519) in the loop of a conserved hairpin near the 3'-end of 16S rRNA in the 30S particle. May play a critical role in biogenesis of 30S subunits. In Zymomonas mobilis subsp. mobilis (strain ATCC 31821 / ZM4 / CP4), this protein is Ribosomal RNA small subunit methyltransferase A.